Consider the following 605-residue polypeptide: SET domain-containing protein SNOG_11806 (605 aa).

Residues 68–132 form a disordered region; that stretch reads TLDLTGMKTP…SRKGTGGLRV (65 aa). The span at 75–89 shows a compositional bias: polar residues; that stretch reads KTPQPSRSPTVTRNV. The span at 104 to 115 shows a compositional bias: acidic residues; that stretch reads ESADDDDDDLQD. Residues 473-579 enclose the SET domain; the sequence is PPVQIYRTAE…AGSEITVDYG (107 aa).

This sequence belongs to the class V-like SAM-binding methyltransferase superfamily.

The chain is SET domain-containing protein SNOG_11806 from Phaeosphaeria nodorum (strain SN15 / ATCC MYA-4574 / FGSC 10173) (Glume blotch fungus).